Consider the following 143-residue polypeptide: Histone H2AX (143 aa).

The interval 1-22 (MSGRGKTGGKARAKAKSRSSRA) is disordered. Serine 2 carries the N-acetylserine modification. The residue at position 2 (serine 2) is a Phosphoserine. N6-acetyllysine occurs at positions 6 and 10. The segment covering 7–19 (TGGKARAKAKSRS) has biased composition (basic residues). Residue lysine 10 is modified to N6-lactoyllysine; alternate. Residues lysine 14 and lysine 16 each participate in a glycyl lysine isopeptide (Lys-Gly) (interchain with G-Cter in ubiquitin) cross-link. Residue lysine 37 is modified to N6-acetyllysine. Residue lysine 120 forms a Glycyl lysine isopeptide (Lys-Gly) (interchain with G-Cter in ubiquitin) linkage. The interval 121–143 (TSATVGPKAPSGGKKATQASQEY) is disordered. Serine 122 carries the post-translational modification Phosphoserine. Residues lysine 128 and lysine 135 each participate in a glycyl lysine isopeptide (Lys-Gly) (interchain with G-Cter in SUMO2) cross-link. The residue at position 140 (serine 140) is a Phosphoserine; by ATM, ATR and PRKDC. The short motif at 140–141 (SQ) is the [ST]-Q motif element. Position 143 is a phosphotyrosine; by WSTF (tyrosine 143).

The protein belongs to the histone H2A family. In terms of assembly, the nucleosome is a histone octamer containing two molecules each of H2A, H2B, H3 and H4 assembled in one H3-H4 heterotetramer and two H2A-H2B heterodimers. The octamer wraps approximately 147 bp of DNA. Interacts with numerous proteins required for DNA damage signaling and repair when phosphorylated on Ser-140. These include MDC1, TP53BP1, BRCA1 and the MRN complex, composed of MRE11, RAD50, and NBN. Interaction with the MRN complex is mediated at least in part by NBN. Also interacts with DHX9/NDHII when phosphorylated on Ser-140 and MCPH1 when phosphorylated at Ser-140 or Tyr-143. Interacts with ARRB2; the interaction is detected in the nucleus upon OR1D2 stimulation. Interacts with WRAP53/TCAB1. Interacts with HDGFL2. Interacts with DNA damage up-regulated protein DDUP. Forms a complex with DDUP and RAD18 following DDUP phosphorylation. (Microbial infection) Interacts with Epstein-Barr virus protein EBNA6. Post-translationally, phosphorylated by VRK1. Phosphorylated on Ser-140 (to form gamma-H2AX or H2AX139ph) in response to DNA double strand breaks (DSBs) generated by exogenous genotoxic agents and by stalled replication forks, and may also occur during meiotic recombination events and immunoglobulin class switching in lymphocytes. Phosphorylation can extend up to several thousand nucleosomes from the actual site of the DSB and may mark the surrounding chromatin for recruitment of proteins required for DNA damage signaling and repair. Widespread phosphorylation may also serve to amplify the damage signal or aid repair of persistent lesions. Phosphorylation of Ser-140 (H2AX139ph) in response to ionizing radiation is mediated by both ATM and PRKDC while defects in DNA replication induce Ser-140 phosphorylation (H2AX139ph) subsequent to activation of ATR and PRKDC. Dephosphorylation of Ser-140 by PP2A is required for DNA DSB repair. In meiosis, Ser-140 phosphorylation (H2AX139ph) may occur at synaptonemal complexes during leptotene as an ATM-dependent response to the formation of programmed DSBs by SPO11. Ser-140 phosphorylation (H2AX139ph) may subsequently occurs at unsynapsed regions of both autosomes and the XY bivalent during zygotene, downstream of ATR and BRCA1 activation. Ser-140 phosphorylation (H2AX139ph) may also be required for transcriptional repression of unsynapsed chromatin and meiotic sex chromosome inactivation (MSCI), whereby the X and Y chromosomes condense in pachytene to form the heterochromatic XY-body. During immunoglobulin class switch recombination in lymphocytes, Ser-140 phosphorylation (H2AX139ph) may occur at sites of DNA-recombination subsequent to activation of the activation-induced cytidine deaminase AICDA. Phosphorylation at Tyr-143 (H2AXY142ph) by BAZ1B/WSTF determines the relative recruitment of either DNA repair or pro-apoptotic factors. Phosphorylation at Tyr-143 (H2AXY142ph) favors the recruitment of APBB1/FE65 and pro-apoptosis factors such as MAPK8/JNK1, triggering apoptosis. In contrast, dephosphorylation of Tyr-143 by EYA proteins (EYA1, EYA2, EYA3 or EYA4) favors the recruitment of MDC1-containing DNA repair complexes to the tail of phosphorylated Ser-140 (H2AX139ph). In terms of processing, monoubiquitination of Lys-120 (H2AXK119ub) by RING1 and RNF2/RING2 complex gives a specific tag for epigenetic transcriptional repression. Following DNA double-strand breaks (DSBs), it is ubiquitinated through 'Lys-63' linkage of ubiquitin moieties by the E2 ligase UBE2N and the E3 ligases RNF8 and RNF168, leading to the recruitment of repair proteins to sites of DNA damage. Ubiquitination at Lys-14 and Lys-16 (H2AK13Ub and H2AK15Ub, respectively) in response to DNA damage is initiated by RNF168 that mediates monoubiquitination at these 2 sites, and 'Lys-63'-linked ubiquitin are then conjugated to monoubiquitin; RNF8 is able to extend 'Lys-63'-linked ubiquitin chains in vitro. H2AK119Ub and ionizing radiation-induced 'Lys-63'-linked ubiquitination (H2AK13Ub and H2AK15Ub) are distinct events. Acetylation at Lys-6 (H2AXK5ac) by KAT5 component of the NuA4 histone acetyltransferase complex promotes NBN/NBS1 assembly at the sites of DNA damage. Acetylation at Lys-37 increases in S and G2 phases. This modification has been proposed to play a role in DNA double-strand break repair.

Its subcellular location is the nucleus. It localises to the chromosome. Functionally, variant histone H2A which replaces conventional H2A in a subset of nucleosomes. Nucleosomes wrap and compact DNA into chromatin, limiting DNA accessibility to the cellular machineries which require DNA as a template. Histones thereby play a central role in transcription regulation, DNA repair, DNA replication and chromosomal stability. DNA accessibility is regulated via a complex set of post-translational modifications of histones, also called histone code, and nucleosome remodeling. Required for checkpoint-mediated arrest of cell cycle progression in response to low doses of ionizing radiation and for efficient repair of DNA double strand breaks (DSBs) specifically when modified by C-terminal phosphorylation. The sequence is that of Histone H2AX from Homo sapiens (Human).